A 503-amino-acid chain; its full sequence is Probable cytosol aminopeptidase (503 aa).

Residues K270 and D275 each coordinate Mn(2+). K282 is an active-site residue. Positions 293, 352, and 354 each coordinate Mn(2+). R356 is a catalytic residue.

This sequence belongs to the peptidase M17 family. It depends on Mn(2+) as a cofactor.

It is found in the cytoplasm. The catalysed reaction is Release of an N-terminal amino acid, Xaa-|-Yaa-, in which Xaa is preferably Leu, but may be other amino acids including Pro although not Arg or Lys, and Yaa may be Pro. Amino acid amides and methyl esters are also readily hydrolyzed, but rates on arylamides are exceedingly low.. The enzyme catalyses Release of an N-terminal amino acid, preferentially leucine, but not glutamic or aspartic acids.. Its function is as follows. Presumably involved in the processing and regular turnover of intracellular proteins. Catalyzes the removal of unsubstituted N-terminal amino acids from various peptides. The protein is Probable cytosol aminopeptidase of Salmonella agona (strain SL483).